A 487-amino-acid chain; its full sequence is Acetyl-coenzyme A carboxylase carboxyl transferase subunit beta, chloroplastic (487 aa).

The region spanning Leu223 to Asn487 is the CoA carboxyltransferase N-terminal domain. Zn(2+) contacts are provided by Cys227, Cys230, Cys246, and Cys249. Residues Cys227–Cys249 form a C4-type zinc finger.

Belongs to the AccD/PCCB family. Acetyl-CoA carboxylase is a heterohexamer composed of biotin carboxyl carrier protein, biotin carboxylase and 2 subunits each of ACCase subunit alpha and ACCase plastid-coded subunit beta (accD). Zn(2+) serves as cofactor.

It localises to the plastid. The protein resides in the chloroplast stroma. It catalyses the reaction N(6)-carboxybiotinyl-L-lysyl-[protein] + acetyl-CoA = N(6)-biotinyl-L-lysyl-[protein] + malonyl-CoA. Its pathway is lipid metabolism; malonyl-CoA biosynthesis; malonyl-CoA from acetyl-CoA: step 1/1. Functionally, component of the acetyl coenzyme A carboxylase (ACC) complex. Biotin carboxylase (BC) catalyzes the carboxylation of biotin on its carrier protein (BCCP) and then the CO(2) group is transferred by the transcarboxylase to acetyl-CoA to form malonyl-CoA. In Panax ginseng (Korean ginseng), this protein is Acetyl-coenzyme A carboxylase carboxyl transferase subunit beta, chloroplastic.